A 333-amino-acid chain; its full sequence is Ketol-acid reductoisomerase (NADP(+)) (333 aa).

The KARI N-terminal Rossmann domain occupies 1-179 (MFYDDDADLS…GGTRAGVIKT (179 aa)). NADP(+) is bound by residues 22-25 (YGSQ), Lys45, Ser48, Ser50, and 80-83 (DTAQ). The active site involves His105. Position 131 (Gly131) interacts with NADP(+). Residues 180 to 325 (TFKDETETDL…KKLRDLMSWV (146 aa)) enclose the KARI C-terminal knotted domain. Residues Asp188, Glu192, Glu224, and Glu228 each coordinate Mg(2+). Ser249 serves as a coordination point for substrate.

The protein belongs to the ketol-acid reductoisomerase family. Mg(2+) serves as cofactor.

It catalyses the reaction (2R)-2,3-dihydroxy-3-methylbutanoate + NADP(+) = (2S)-2-acetolactate + NADPH + H(+). It carries out the reaction (2R,3R)-2,3-dihydroxy-3-methylpentanoate + NADP(+) = (S)-2-ethyl-2-hydroxy-3-oxobutanoate + NADPH + H(+). The protein operates within amino-acid biosynthesis; L-isoleucine biosynthesis; L-isoleucine from 2-oxobutanoate: step 2/4. It functions in the pathway amino-acid biosynthesis; L-valine biosynthesis; L-valine from pyruvate: step 2/4. Involved in the biosynthesis of branched-chain amino acids (BCAA). Catalyzes an alkyl-migration followed by a ketol-acid reduction of (S)-2-acetolactate (S2AL) to yield (R)-2,3-dihydroxy-isovalerate. In the isomerase reaction, S2AL is rearranged via a Mg-dependent methyl migration to produce 3-hydroxy-3-methyl-2-ketobutyrate (HMKB). In the reductase reaction, this 2-ketoacid undergoes a metal-dependent reduction by NADPH to yield (R)-2,3-dihydroxy-isovalerate. The sequence is that of Ketol-acid reductoisomerase (NADP(+)) from Mycobacterium bovis (strain ATCC BAA-935 / AF2122/97).